A 170-amino-acid polypeptide reads, in one-letter code: Chorion protein S18 (170 aa).

The first 17 residues, 1-17, serve as a signal peptide directing secretion; the sequence is MMKFMCIFVCAIAAVSA. The segment covering 146 to 159 has biased composition (low complexity); that stretch reads AAAASSSVAGQHSG. Residues 146 to 170 are disordered; it reads AAAASSSVAGQHSGYKNSGYKNSSY. Positions 160-170 are enriched in polar residues; the sequence is YKNSGYKNSSY.

The protein belongs to the chorion protein S15/S18 family.

The protein resides in the secreted. Functionally, chorion membrane (egg shell) protein; plays a role in protecting the egg from the environment. This is Chorion protein S18 (Cp18) from Drosophila virilis (Fruit fly).